The chain runs to 344 residues: Ferrochelatase (344 aa).

Fe cation-binding residues include His211 and Glu292.

This sequence belongs to the ferrochelatase family.

The protein resides in the cytoplasm. The enzyme catalyses heme b + 2 H(+) = protoporphyrin IX + Fe(2+). It participates in porphyrin-containing compound metabolism; protoheme biosynthesis; protoheme from protoporphyrin-IX: step 1/1. Its function is as follows. Catalyzes the ferrous insertion into protoporphyrin IX. This is Ferrochelatase from Methylobacillus flagellatus (strain ATCC 51484 / DSM 6875 / VKM B-1610 / KT).